The following is a 641-amino-acid chain: Fructose-1,6-bisphosphatase class 3 (641 aa).

Belongs to the FBPase class 3 family. It depends on Mn(2+) as a cofactor.

The catalysed reaction is beta-D-fructose 1,6-bisphosphate + H2O = beta-D-fructose 6-phosphate + phosphate. Its pathway is carbohydrate biosynthesis; gluconeogenesis. In Latilactobacillus sakei subsp. sakei (strain 23K) (Lactobacillus sakei subsp. sakei), this protein is Fructose-1,6-bisphosphatase class 3.